The following is a 301-amino-acid chain: Sulfate adenylyltransferase subunit 2 (301 aa).

A disordered region spans residues Arg279–Phe301.

It belongs to the PAPS reductase family. CysD subfamily. In terms of assembly, sulfate-activating enzymes, NodP and NodQ, may be physically associated.

The enzyme catalyses sulfate + ATP + H(+) = adenosine 5'-phosphosulfate + diphosphate. Proposed to provide activated sulfate for transfer to nod factor. The chain is Sulfate adenylyltransferase subunit 2 (nodP) from Rhizobium sp. (strain N33).